Consider the following 939-residue polypeptide: Aconitate hydratase A (939 aa).

The interval 433-453 is disordered; that stretch reads GSGESLATGAEGRPSKPVTVA. Residues Cys475, Cys541, and Cys544 each contribute to the [4Fe-4S] cluster site.

The protein belongs to the aconitase/IPM isomerase family. In terms of assembly, monomer. [4Fe-4S] cluster serves as cofactor.

The catalysed reaction is citrate = D-threo-isocitrate. It catalyses the reaction (2S,3R)-3-hydroxybutane-1,2,3-tricarboxylate = 2-methyl-cis-aconitate + H2O. It participates in carbohydrate metabolism; tricarboxylic acid cycle; isocitrate from oxaloacetate: step 2/2. The protein operates within organic acid metabolism; propanoate degradation. Its function is as follows. Involved in the catabolism of short chain fatty acids (SCFA) via the tricarboxylic acid (TCA)(acetyl degradation route) and probably via the 2-methylcitrate cycle I (propionate degradation route). Catalyzes the reversible isomerization of citrate to isocitrate via cis-aconitate. Could catalyze the hydration of 2-methyl-cis-aconitate to yield (2R,3S)-2-methylisocitrate. The apo form of AcnA functions as a RNA-binding regulatory protein. In Corynebacterium glutamicum (strain ATCC 13032 / DSM 20300 / JCM 1318 / BCRC 11384 / CCUG 27702 / LMG 3730 / NBRC 12168 / NCIMB 10025 / NRRL B-2784 / 534), this protein is Aconitate hydratase A (acn).